Consider the following 195-residue polypeptide: Large ribosomal subunit protein bL27c (195 aa).

Residues 1-60 constitute a chloroplast transit peptide; that stretch reads MASMAFTLVGAFKGMSLSSPCHSSSSASFLRADRVSLSVGGGVGMGVPMTMPVRRLTIQM.

This sequence belongs to the bacterial ribosomal protein bL27 family. Part of the 50S ribosomal subunit.

It is found in the plastid. The protein resides in the chloroplast. This Oryza sativa subsp. japonica (Rice) protein is Large ribosomal subunit protein bL27c (RPL27).